The chain runs to 92 residues: Small ribosomal subunit protein uS19 (92 aa).

Belongs to the universal ribosomal protein uS19 family.

Its function is as follows. Protein S19 forms a complex with S13 that binds strongly to the 16S ribosomal RNA. This Clostridium botulinum (strain Eklund 17B / Type B) protein is Small ribosomal subunit protein uS19.